The chain runs to 76 residues: DNA-directed RNA polymerase subunit epsilon (76 aa).

It belongs to the RNA polymerase subunit epsilon family. In terms of assembly, RNAP is composed of a core of 2 alpha, a beta and a beta' subunit. The core is associated with a delta subunit, and at least one of epsilon or omega. When a sigma factor is associated with the core the holoenzyme is formed, which can initiate transcription.

It carries out the reaction RNA(n) + a ribonucleoside 5'-triphosphate = RNA(n+1) + diphosphate. In terms of biological role, a non-essential component of RNA polymerase (RNAP). The protein is DNA-directed RNA polymerase subunit epsilon of Streptococcus equi subsp. equi (strain 4047).